We begin with the raw amino-acid sequence, 70 residues long: Small ribosomal subunit protein bS21 (70 aa).

Belongs to the bacterial ribosomal protein bS21 family.

This chain is Small ribosomal subunit protein bS21, found in Methylobacillus flagellatus (strain ATCC 51484 / DSM 6875 / VKM B-1610 / KT).